Consider the following 190-residue polypeptide: Prostaglandin-H2 D-isomerase (190 aa).

Positions 1–22 are cleaved as a signal peptide; it reads MATHHTLWMGLALLGVLGDLQA. The O-linked (GalNAc...) serine glycan is linked to serine 29. Asparagine 51 carries an N-linked (GlcNAc...) (complex) asparagine glycan. The active-site Nucleophile is the cysteine 65. Asparagine 78 is a glycosylation site (N-linked (GlcNAc...) (complex) asparagine). A disulfide bond links cysteine 89 and cysteine 186.

The protein belongs to the calycin superfamily. Lipocalin family. As to quaternary structure, monomer. N- and O-glycosylated. Both N-glycosylation recognition sites are almost quantitatively occupied by N-glycans of the biantennary complex type, with a considerable proportion of structures bearing a bisecting GlcNAc. N-glycan at Asn-78: dHex1Hex5HexNAc4. Agalacto structure as well as sialylated and nonsialylated oligosaccharides bearing alpha2-3- and/or alpha2-6-linked NeuNAc are present. As to expression, abundant in the brain and CNS, where it is expressed in tissues of the blood-brain barrier and secreted into the cerebro-spinal fluid. Abundantly expressed in the heart. In the male reproductive system, it is expressed in the testis, epididymis and prostate, and is secreted into the seminal fluid. Expressed in the eye and secreted into the aqueous humor. Lower levels detected in various tissue fluids such as serum, normal urine, ascitic fluid and tear fluid. Also found in a number of other organs including ovary, fimbriae of the fallopian tubes, kidney, leukocytes.

It localises to the rough endoplasmic reticulum. The protein localises to the nucleus membrane. It is found in the golgi apparatus. The protein resides in the cytoplasm. Its subcellular location is the perinuclear region. It localises to the secreted. The enzyme catalyses prostaglandin H2 = prostaglandin D2. In terms of biological role, catalyzes the conversion of PGH2 to PGD2, a prostaglandin involved in smooth muscle contraction/relaxation and a potent inhibitor of platelet aggregation. Involved in a variety of CNS functions, such as sedation, NREM sleep and PGE2-induced allodynia, and may have an anti-apoptotic role in oligodendrocytes. Binds small non-substrate lipophilic molecules, including biliverdin, bilirubin, retinal, retinoic acid and thyroid hormone, and may act as a scavenger for harmful hydrophobic molecules and as a secretory retinoid and thyroid hormone transporter. Possibly involved in development and maintenance of the blood-brain, blood-retina, blood-aqueous humor and blood-testis barrier. It is likely to play important roles in both maturation and maintenance of the central nervous system and male reproductive system. Involved in PLA2G3-dependent maturation of mast cells. PLA2G3 is secreted by immature mast cells and acts on nearby fibroblasts upstream to PTDGS to synthesize PGD2, which in turn promotes mast cell maturation and degranulation via PTGDR. In Homo sapiens (Human), this protein is Prostaglandin-H2 D-isomerase (PTGDS).